The sequence spans 524 residues: MTPVTPAAFEKRDNVVIFDTTMRDGEQSPGASMSHDEKLELAKILEEMGVDVIEAGFPIASNGDFEAVREIAKIVKNSTIAGLCRAHQVDIDRCAEALKGTQRGRIHVVIATSDLHMKHKLQMEPDAVIDVIARSVTHARNLRDDVEWSAEDATRSDRQFLRRAIETAIKAGATTINLPDTVGYTYPSEYADLFSWMTQNVEGADKVIFSTHCHNDLGLAVANSLAGVQGGARQIECAINGLGERAGNAALEEVVMALKVRGDKLPYETKIDTTHITRASRYVSAITGFPVQYNKAIVGKNAFAHESGIHQDGMLKNRETYEIMTPESVGQAPSSLVMGKHSGSHAFRAKLKDLGYELGQNALKEAFGRFKDLADRKKHVYDDDIIALVDDALARGSERIRVQRLRVVAGTDGQSAELTLEVDGEVKTSEASGDGPVDAVFNAIQQIVPHDAALRLFQVHAVTEGTDAQAQVSVRLEEDGRIATGQAADTDTLTASAKAYVNALNNLMARKEKSRPEAAIASGF.

The 263-residue stretch at 15 to 277 folds into the Pyruvate carboxyltransferase domain; it reads VVIFDTTMRD…ETKIDTTHIT (263 aa). Positions 24, 212, 214, and 248 each coordinate Mn(2+). Residues 401–524 are regulatory domain; sequence RVQRLRVVAG…RPEAAIASGF (124 aa).

Belongs to the alpha-IPM synthase/homocitrate synthase family. LeuA type 1 subfamily. Homodimer. Mn(2+) is required as a cofactor.

The protein localises to the cytoplasm. The catalysed reaction is 3-methyl-2-oxobutanoate + acetyl-CoA + H2O = (2S)-2-isopropylmalate + CoA + H(+). The protein operates within amino-acid biosynthesis; L-leucine biosynthesis; L-leucine from 3-methyl-2-oxobutanoate: step 1/4. Its function is as follows. Catalyzes the condensation of the acetyl group of acetyl-CoA with 3-methyl-2-oxobutanoate (2-ketoisovalerate) to form 3-carboxy-3-hydroxy-4-methylpentanoate (2-isopropylmalate). The polypeptide is 2-isopropylmalate synthase (Caulobacter sp. (strain K31)).